The following is a 334-amino-acid chain: Ferrochelatase 1 (334 aa).

2 residues coordinate Fe cation: histidine 201 and glutamate 282.

It belongs to the ferrochelatase family.

It is found in the cytoplasm. The catalysed reaction is heme b + 2 H(+) = protoporphyrin IX + Fe(2+). It functions in the pathway porphyrin-containing compound metabolism; protoheme biosynthesis; protoheme from protoporphyrin-IX: step 1/1. Catalyzes the ferrous insertion into protoporphyrin IX. In Shewanella oneidensis (strain ATCC 700550 / JCM 31522 / CIP 106686 / LMG 19005 / NCIMB 14063 / MR-1), this protein is Ferrochelatase 1.